We begin with the raw amino-acid sequence, 468 residues long: uncharacterized protein (468 aa).

Transmembrane regions (helical) follow at residues 13-33, 40-60, 76-96, 112-132, 141-161, 194-214, 237-257, 260-280, 328-348, 354-374, 414-434, and 443-463; these read LEAF…YALF, LMII…HCYL, ALLI…GGTI, LYVT…TSWG, FMGV…AVVA, LLYT…VYGL, VYHF…GSIT, PTIP…ILIQ, CFCA…TVII, FVHS…TMIG, IIEP…TLGV, and AILC…GIGI.

Belongs to the NhaC Na(+)/H(+) (TC 2.A.35) antiporter family.

The protein resides in the cell membrane. This is an uncharacterized protein from Haemophilus influenzae (strain ATCC 51907 / DSM 11121 / KW20 / Rd).